A 488-amino-acid chain; its full sequence is 1-hydroxycarotenoid 3,4-desaturase (488 aa).

FAD is bound by residues Glu31, Lys39, 55–56 (SL), Val247, Asn275, Leu431, Gly461, and 468–469 (GI).

It belongs to the carotenoid/retinoid oxidoreductase family. In terms of assembly, monomer.

The enzyme catalyses rhodopin + A = (3E)-3,4-didehydrorhodopin + AH2. The catalysed reaction is 1'-hydroxy-gamma-carotene + A = 1'-hydroxytorulene + AH2. It catalyses the reaction 1-hydroxy-all-trans-1,2-dihydro-neurosporene + A = demethylspheroidene + AH2. It carries out the reaction 1,1'-dihydroxy-1,1',2,2'-tetrahydroneurosporene + A = 1'-hydroxy-demethylspheroidene + AH2. The enzyme catalyses 1,1'-dihydroxy-1,1',2,2'-tetrahydrolycopene + A = 1,1'-dihydroxy-3,4-didehydro-1,2-dihydrolycopene + AH2. The protein operates within carotenoid biosynthesis. Catalyzes the introduction of a C-3,4 double bond into 1'-hydroxy-gamma-carotene and rhodopin (1-hydroxylycopene) to yield 1'-hydroxytorulene and (3E)-3,4-didehydrorhodopin, respectively. Can also 1-hydroxy-all-trans-1,2-dihydro-neurosporene, 1,1'-dihydroxy-1,1',2,2'-tetrahydroneurosporene and 1,1'-dihydroxy-1,1',2,2'-tetrahydrolycopene. Probably involved in the synthesis of myxol, a gamma-carotene derivative. May use FAD as a proton acceptor. This Flavobacterium sp. (strain P99-3) protein is 1-hydroxycarotenoid 3,4-desaturase.